A 386-amino-acid polypeptide reads, in one-letter code: Phosphoglycerate kinase (386 aa).

Substrate is bound by residues 21–23, arginine 36, 59–62, arginine 113, and arginine 146; these read DLN and HLGR. ATP is bound by residues lysine 197, glutamate 313, and 339–342; that span reads GGDT.

Belongs to the phosphoglycerate kinase family. In terms of assembly, monomer.

Its subcellular location is the cytoplasm. It catalyses the reaction (2R)-3-phosphoglycerate + ATP = (2R)-3-phospho-glyceroyl phosphate + ADP. It functions in the pathway carbohydrate degradation; glycolysis; pyruvate from D-glyceraldehyde 3-phosphate: step 2/5. In Serratia proteamaculans (strain 568), this protein is Phosphoglycerate kinase.